The chain runs to 382 residues: UDP-4-amino-4-deoxy-L-arabinose--oxoglutarate aminotransferase (382 aa).

N6-(pyridoxal phosphate)lysine is present on Lys-183.

This sequence belongs to the DegT/DnrJ/EryC1 family. ArnB subfamily. In terms of assembly, homodimer. Pyridoxal 5'-phosphate is required as a cofactor.

The catalysed reaction is UDP-4-amino-4-deoxy-beta-L-arabinose + 2-oxoglutarate = UDP-beta-L-threo-pentopyranos-4-ulose + L-glutamate. Its pathway is nucleotide-sugar biosynthesis; UDP-4-deoxy-4-formamido-beta-L-arabinose biosynthesis; UDP-4-deoxy-4-formamido-beta-L-arabinose from UDP-alpha-D-glucuronate: step 2/3. The protein operates within bacterial outer membrane biogenesis; lipopolysaccharide biosynthesis. Catalyzes the conversion of UDP-4-keto-arabinose (UDP-Ara4O) to UDP-4-amino-4-deoxy-L-arabinose (UDP-L-Ara4N). The modified arabinose is attached to lipid A and is required for resistance to polymyxin and cationic antimicrobial peptides. This chain is UDP-4-amino-4-deoxy-L-arabinose--oxoglutarate aminotransferase, found in Pseudomonas aeruginosa (strain UCBPP-PA14).